We begin with the raw amino-acid sequence, 241 residues long: MRVVVSIGGSVLAPDLDPDRVAAYAEAIERLAADGCEVGVVVGGGGVAREYIETARELGANEVELDQLGIGTTRLNARLLIAALAGGANLSPATGYDEAAAALRRGEVSVMGGVTPGQTTDAVAAAFAESVDADLLVYATSANGVYDADPNVDDDATQFGSMSPAELVDIVLPMSRNAGASAPVDLLAAKLIDRAGIRSIVLDGTNPEVVVDAVLRGDHTGTDVIPTGSEEPIYWTGSSDA.

Position 9-10 (9-10 (GS)) interacts with ATP. UMP is bound at residue Gly-44. Gly-45 and Arg-49 together coordinate ATP. UMP contacts are provided by residues Asp-66 and 114-120 (VTPGQTT). Residues Thr-140, Tyr-146, and Asp-149 each coordinate ATP. Residues 222–241 (TDVIPTGSEEPIYWTGSSDA) form a disordered region.

This sequence belongs to the UMP kinase family. In terms of assembly, homohexamer.

The protein localises to the cytoplasm. The enzyme catalyses UMP + ATP = UDP + ADP. The protein operates within pyrimidine metabolism; CTP biosynthesis via de novo pathway; UDP from UMP (UMPK route): step 1/1. With respect to regulation, inhibited by UTP. Functionally, catalyzes the reversible phosphorylation of UMP to UDP. This Halorubrum lacusprofundi (strain ATCC 49239 / DSM 5036 / JCM 8891 / ACAM 34) protein is Uridylate kinase.